The sequence spans 521 residues: FAD-dependent monooxygenase DEP2 (521 aa).

The signal sequence occupies residues 1–22 (MHDSPPFKVIIVGAGVTGLTLA). Aspartate 36 and arginine 109 together coordinate FAD. N-linked (GlcNAc...) asparagine glycans are attached at residues asparagine 139 and asparagine 220. 2 residues coordinate FAD: aspartate 310 and glycine 323. Residues 477–497 (ILVLWAGLWLAICFFHLVFSG) traverse the membrane as a helical segment. Asparagine 515 carries N-linked (GlcNAc...) asparagine glycosylation.

The protein belongs to the paxM FAD-dependent monooxygenase family. It depends on FAD as a cofactor.

It is found in the membrane. It participates in polyketide biosynthesis. Its function is as follows. Part of the gene cluster that mediates the biosynthesis of depudecin, a highly oxidized eleven-carbon linear polyketide that acts as a histone deacetylase (HDAC) inhibitor and makes a small contribution to pathogenesis. The reducing polyketide synthase DEP5 is the central enzyme in depudecin biosynthesis by yielding the backbone polyketide chain. The monooxygenases DEP2 and DEP4, as well as the uncharacterized protein DEP1, then act as tailoring enzymes to modify the intermediate polyketide chain into depudecin. The chain is FAD-dependent monooxygenase DEP2 from Fusarium langsethiae.